Here is a 56-residue protein sequence, read N- to C-terminus: Photosystem II reaction center X protein (56 aa).

A helical membrane pass occupies residues 27–47 (IGSFLAAGALIVAPAAAALIW).

The protein belongs to the PsbX family. Type 2 subfamily. In terms of assembly, PSII consists of a core antenna complex that captures photons, and an electron transfer chain that converts photonic excitation into a charge separation. PSII forms dimeric complexes.

It is found in the cellular thylakoid membrane. In terms of biological role, involved in the binding and/or turnover of quinones at the Q(B) site of Photosystem II. In Prochlorococcus marinus (strain NATL2A), this protein is Photosystem II reaction center X protein.